The sequence spans 678 residues: Vacuolar fusion protein mon1 (678 aa).

3 disordered regions span residues 1 to 116 (MDRD…YTSP), 449 to 474 (EENN…VTSP), and 568 to 591 (FETS…KTTE). A compositionally biased stretch (low complexity) spans 10–20 (NDGTNDNNDTT). Residues 63–77 (RPTTQVSTIDISTLS) show a composition bias toward polar residues. A compositionally biased stretch (low complexity) spans 87–105 (STSATSATSATSATRSVAS). Residues 106–116 (PQSSASGYTSP) show a composition bias toward polar residues. Residues 450–459 (ENNSNNTNNP) are compositionally biased toward low complexity. Pro residues predominate over residues 460 to 471 (EQPPQPPPPKPV).

The protein belongs to the MON1/SAND family.

It is found in the endosome. The protein localises to the multivesicular body membrane. Its subcellular location is the prevacuolar compartment membrane. It localises to the vacuole membrane. Functionally, in complex with CCZ1, is required for multiple vacuole delivery pathways including the cytoplasm to vacuole transport (Cvt), autophagy, pexophagy and endocytosis. The MON1-CCZ1 complex acts at the fusion of vesicles with the vacuole, through its regulation of the SNARE complex during the coordinated priming and docking stages of fusion, and particularly at the stage of tethering/docking. This Neurospora crassa (strain ATCC 24698 / 74-OR23-1A / CBS 708.71 / DSM 1257 / FGSC 987) protein is Vacuolar fusion protein mon1 (apg-13).